Consider the following 400-residue polypeptide: Argininosuccinate synthase (400 aa).

8–16 (AYSGGLDTS) serves as a coordination point for ATP. The L-citrulline site is built by tyrosine 86 and serine 91. Glycine 116 is an ATP binding site. Positions 118, 122, and 123 each coordinate L-aspartate. Residue asparagine 122 coordinates L-citrulline. L-citrulline is bound by residues arginine 126, serine 175, serine 184, glutamate 260, and tyrosine 272.

This sequence belongs to the argininosuccinate synthase family. Type 1 subfamily. As to quaternary structure, homotetramer.

The protein localises to the cytoplasm. The enzyme catalyses L-citrulline + L-aspartate + ATP = 2-(N(omega)-L-arginino)succinate + AMP + diphosphate + H(+). The protein operates within amino-acid biosynthesis; L-arginine biosynthesis; L-arginine from L-ornithine and carbamoyl phosphate: step 2/3. The polypeptide is Argininosuccinate synthase (Clostridium acetobutylicum (strain ATCC 824 / DSM 792 / JCM 1419 / IAM 19013 / LMG 5710 / NBRC 13948 / NRRL B-527 / VKM B-1787 / 2291 / W)).